We begin with the raw amino-acid sequence, 266 residues long: Glucosamine-6-phosphate deaminase (266 aa).

The active-site Proton acceptor; for enolization step is the Asp72. Catalysis depends on Asp141, which acts as the For ring-opening step. The Proton acceptor; for ring-opening step role is filled by His143. Residue Glu148 is the For ring-opening step of the active site.

The protein belongs to the glucosamine/galactosamine-6-phosphate isomerase family. NagB subfamily. As to quaternary structure, homohexamer.

The enzyme catalyses alpha-D-glucosamine 6-phosphate + H2O = beta-D-fructose 6-phosphate + NH4(+). The protein operates within amino-sugar metabolism; N-acetylneuraminate degradation; D-fructose 6-phosphate from N-acetylneuraminate: step 5/5. Allosterically activated by N-acetylglucosamine 6-phosphate (GlcNAc6P). Its function is as follows. Catalyzes the reversible isomerization-deamination of glucosamine 6-phosphate (GlcN6P) to form fructose 6-phosphate (Fru6P) and ammonium ion. In Pectobacterium atrosepticum (strain SCRI 1043 / ATCC BAA-672) (Erwinia carotovora subsp. atroseptica), this protein is Glucosamine-6-phosphate deaminase.